The sequence spans 156 residues: Small ribosomal subunit protein uS7 (156 aa).

Belongs to the universal ribosomal protein uS7 family. In terms of assembly, part of the 30S ribosomal subunit. Contacts proteins S9 and S11.

In terms of biological role, one of the primary rRNA binding proteins, it binds directly to 16S rRNA where it nucleates assembly of the head domain of the 30S subunit. Is located at the subunit interface close to the decoding center, probably blocks exit of the E-site tRNA. In Desulfosudis oleivorans (strain DSM 6200 / JCM 39069 / Hxd3) (Desulfococcus oleovorans), this protein is Small ribosomal subunit protein uS7.